We begin with the raw amino-acid sequence, 132 residues long: Small ribosomal subunit protein uS8 (132 aa).

The protein belongs to the universal ribosomal protein uS8 family. As to quaternary structure, part of the 30S ribosomal subunit. Contacts proteins S5 and S12.

Functionally, one of the primary rRNA binding proteins, it binds directly to 16S rRNA central domain where it helps coordinate assembly of the platform of the 30S subunit. The sequence is that of Small ribosomal subunit protein uS8 from Methylocella silvestris (strain DSM 15510 / CIP 108128 / LMG 27833 / NCIMB 13906 / BL2).